The chain runs to 923 residues: Mitochondrial 10-formyltetrahydrofolate dehydrogenase (923 aa).

A mitochondrion; not cleaved-targeting transit peptide spans 1–19 (MLWRGSQALRHFSTSRVYF). The tract at residues 23-331 (LKLALIGQSL…PASQYFSAGE (309 aa)) is hydrolase domain. A Phosphoserine modification is found at Ser31. Lys60 is modified (N6-succinyllysine). 110-112 (QFI) serves as a coordination point for (6R)-10-formyltetrahydrofolate. His128 (proton donor) is an active-site residue. (6R)-10-formyltetrahydrofolate is bound at residue Asp164. The Carrier domain occupies 339–416 (AEELKVAETI…DFIQKVVRRL (78 aa)). At Ser375 the chain carries O-(pantetheine 4'-phosphoryl)serine. Residues 438 to 923 (TVKIPYQCFI…LKIKTVTLEY (486 aa)) are aldehyde dehydrogenase domain. NADP(+)-binding positions include 592 to 594 (IPW) and 618 to 621 (KPAQ). Ser650 is modified (phosphoserine). Residues 651–656 (GGVAGQ) and 671–672 (GS) contribute to the NADP(+) site. Lys681 carries the post-translational modification N6-succinyllysine. The active-site Proton acceptor is Glu694. 694–695 (EL) contacts NADP(+). The active-site Proton donor is Cys728. NADP(+) contacts are provided by residues Lys778 and 825-827 (ESF). The residue at position 903 (Lys903) is an N6-acetyllysine.

In the N-terminal section; belongs to the GART family. The protein in the C-terminal section; belongs to the aldehyde dehydrogenase family. ALDH1L subfamily. Post-translationally, phosphopantetheinylation at Ser-375 by AASDHPPT is required for the formyltetrahydrofolate dehydrogenase activity.

Its subcellular location is the mitochondrion. The enzyme catalyses (6R)-10-formyltetrahydrofolate + NADP(+) + H2O = (6S)-5,6,7,8-tetrahydrofolate + CO2 + NADPH + H(+). Its function is as follows. Mitochondrial 10-formyltetrahydrofolate dehydrogenase that catalyzes the NADP(+)-dependent conversion of 10-formyltetrahydrofolate to tetrahydrofolate and carbon dioxide. The protein is Mitochondrial 10-formyltetrahydrofolate dehydrogenase of Mus musculus (Mouse).